Here is a 386-residue protein sequence, read N- to C-terminus: Beta-citrylglutamate synthase B (386 aa).

Residues 119–304 form the ATP-grasp domain; it reads FQELAGHGVP…VAGIIADYAA (186 aa). Residues lysine 158, 193–203, and arginine 219 contribute to the ATP site; that span reads QKYVKESHGRD. Residues aspartate 264, glutamate 277, and asparagine 279 each coordinate Mg(2+). Mn(2+)-binding residues include aspartate 264, glutamate 277, and asparagine 279. Residues 325 to 359 form a disordered region; it reads ASETSEPELGPPASTAVDNMSASSSSVDSDPESTE. Residues 338–352 show a composition bias toward low complexity; it reads STAVDNMSASSSSVD.

The protein belongs to the RimK family. Mg(2+) serves as cofactor. The cofactor is Mn(2+).

It localises to the cytoplasm. It catalyses the reaction citrate + L-glutamate + ATP = beta-citrylglutamate + ADP + phosphate + H(+). The enzyme catalyses N-acetyl-L-aspartate + L-glutamate + ATP = N-acetyl-L-aspartyl-L-glutamate + ADP + phosphate + H(+). In terms of biological role, catalyzes the synthesis of beta-citryl-L-glutamate and N-acetyl-L-aspartyl-L-glutamate. Beta-citryl-L-glutamate is synthesized more efficiently than N-acetyl-L-aspartyl-L-glutamate. The polypeptide is Beta-citrylglutamate synthase B (RIMKLB) (Homo sapiens (Human)).